We begin with the raw amino-acid sequence, 156 residues long: ATP synthase subunit b (156 aa).

Residues 7-29 form a helical membrane-spanning segment; sequence LFAQMVVFLVLAWFTMKFVWPPL.

This sequence belongs to the ATPase B chain family. In terms of assembly, F-type ATPases have 2 components, F(1) - the catalytic core - and F(0) - the membrane proton channel. F(1) has five subunits: alpha(3), beta(3), gamma(1), delta(1), epsilon(1). F(0) has three main subunits: a(1), b(2) and c(10-14). The alpha and beta chains form an alternating ring which encloses part of the gamma chain. F(1) is attached to F(0) by a central stalk formed by the gamma and epsilon chains, while a peripheral stalk is formed by the delta and b chains.

The protein resides in the cell inner membrane. In terms of biological role, f(1)F(0) ATP synthase produces ATP from ADP in the presence of a proton or sodium gradient. F-type ATPases consist of two structural domains, F(1) containing the extramembraneous catalytic core and F(0) containing the membrane proton channel, linked together by a central stalk and a peripheral stalk. During catalysis, ATP synthesis in the catalytic domain of F(1) is coupled via a rotary mechanism of the central stalk subunits to proton translocation. Component of the F(0) channel, it forms part of the peripheral stalk, linking F(1) to F(0). The sequence is that of ATP synthase subunit b from Burkholderia vietnamiensis (strain G4 / LMG 22486) (Burkholderia cepacia (strain R1808)).